A 265-amino-acid polypeptide reads, in one-letter code: Glycine/sarcosine N-methyltransferase (265 aa).

S-adenosyl-L-methionine contacts are provided by residues Y28, W36, R45, A69, D90, 116–117 (DW), and L134. 3 residues coordinate substrate: N136, R169, and Y208.

The protein belongs to the class I-like SAM-binding methyltransferase superfamily. Glycine N-methyltransferase family. In terms of assembly, monomer.

The catalysed reaction is glycine + 2 S-adenosyl-L-methionine = N,N-dimethylglycine + 2 S-adenosyl-L-homocysteine + 2 H(+). It catalyses the reaction glycine + S-adenosyl-L-methionine = sarcosine + S-adenosyl-L-homocysteine + H(+). The enzyme catalyses sarcosine + S-adenosyl-L-methionine = N,N-dimethylglycine + S-adenosyl-L-homocysteine + H(+). It participates in amine and polyamine biosynthesis; betaine biosynthesis via glycine pathway; betaine from glycine: step 1/3. The protein operates within amine and polyamine biosynthesis; betaine biosynthesis via glycine pathway; betaine from glycine: step 2/3. Inhibited by acetate, dimethylglycine and S-adenosyl-L-homocysteine. Catalyzes the methylation of glycine and sarcosine to sarcosine and dimethylglycine, respectively, with S-adenosylmethionine (AdoMet) acting as the methyl donor. The polypeptide is Glycine/sarcosine N-methyltransferase (Aphanothece halophytica).